The primary structure comprises 96 residues: Teretoxin Tan6.14 (96 aa).

The N-terminal stretch at 1–21 (MRPLLVFVLMVSVSLAFSLEG) is a signal peptide. Residues 22–60 (MPNNGGDSVASITANQARRFKRNPLFSFAQHSLVDLKAR) constitute a propeptide that is removed on maturation.

Post-translationally, contains 3 disulfide bonds. In terms of tissue distribution, expressed by the venom duct.

The protein resides in the secreted. The polypeptide is Teretoxin Tan6.14 (Terebra anilis (Auger snail)).